Consider the following 677-residue polypeptide: DNA gyrase subunit B, novobiocin-resistant (677 aa).

A disordered region spans residues 1–23 (MTTYDTRTATDTRGSEQPGHVGT). The segment at 154 to 295 (IWTDGHRWTQ…RLLSAEIALQ (142 aa)) is novobiocin-binding. The Toprim domain maps to 456-570 (SEIFIVEGDS…EGHVHLSRPP (115 aa)). 3 residues coordinate Mg(2+): E462, D535, and D537.

The protein belongs to the type II topoisomerase GyrB family. Heterotetramer, composed of two GyrA and two GyrB chains. In the heterotetramer, GyrA contains the active site tyrosine that forms a transient covalent intermediate with DNA, while GyrB binds cofactors and catalyzes ATP hydrolysis. Mg(2+) is required as a cofactor. Requires Mn(2+) as cofactor. The cofactor is Ca(2+).

It localises to the cytoplasm. It carries out the reaction ATP-dependent breakage, passage and rejoining of double-stranded DNA.. In terms of biological role, a type II topoisomerase that negatively supercoils closed circular double-stranded (ds) DNA in an ATP-dependent manner to modulate DNA topology and maintain chromosomes in an underwound state. Negative supercoiling favors strand separation, and DNA replication, transcription, recombination and repair, all of which involve strand separation. Also able to catalyze the interconversion of other topological isomers of dsDNA rings, including catenanes and knotted rings. Type II topoisomerases break and join 2 DNA strands simultaneously in an ATP-dependent manner. In Streptomyces niveus (Streptomyces spheroides), this protein is DNA gyrase subunit B, novobiocin-resistant.